The chain runs to 190 residues: Ohanin (190 aa).

The N-terminal stretch at 1–20 (MLLFTLCFFADQENGGKALA) is a signal peptide. Residues 21–127 (SPPGNWQKAD…RIWQKGLWWL (107 aa)) enclose the B30.2/SPRY domain. Residues 128 to 190 (RRLETDSDKL…IGARVSLANL (63 aa)) constitute a propeptide that is removed on maturation.

As to expression, expressed by the venom gland.

Its subcellular location is the secreted. Functionally, neurotoxin that produces dose-dependent hypolocomotion and hyperalgesia in mice. May directly act on the central nervous system, as it is 6500-fold more potent when administered intracerebroventricularly than intraperitoneal. This Ophiophagus hannah (King cobra) protein is Ohanin.